The chain runs to 285 residues: Urease accessory protein UreD 1 (285 aa).

The protein belongs to the UreD family. UreD, UreF and UreG form a complex that acts as a GTP-hydrolysis-dependent molecular chaperone, activating the urease apoprotein by helping to assemble the nickel containing metallocenter of UreC. The UreE protein probably delivers the nickel.

The protein resides in the cytoplasm. In terms of biological role, required for maturation of urease via the functional incorporation of the urease nickel metallocenter. The chain is Urease accessory protein UreD 1 from Pseudomonas syringae pv. syringae (strain B728a).